We begin with the raw amino-acid sequence, 196 residues long: MSTARFIKCVTVGDGAVGKTCMLISYTSNTFPTDYVPTVFDNFSANVVVDGSTVNLGLWDTAGQEDYNRLRPLSYRGADVFLLAFSLISKASYENIYKKWIPELRHYAHNVPVVLVGTKLDLRDDKQFLIDHPGATPISTSQGEELKKMIGAVTYIECSSKTQQNVKAVFDAAIKVALRPPKPKRKPCKRRTCAFL.

Residue Gly-13 to Thr-20 coordinates GTP. The Effector region motif lies at Tyr-35 to Phe-43. Residues Asp-60 to Gln-64 and Thr-118 to Asp-121 contribute to the GTP site. Cys-193 bears the Cysteine methyl ester mark. The S-geranylgeranyl cysteine moiety is linked to residue Cys-193. A propeptide spans Ala-194–Leu-196 (removed in mature form).

This sequence belongs to the small GTPase superfamily. Rho family.

The protein resides in the cytoplasm. It localises to the membrane. Functionally, could participate in a signal transduction pathway that controls cytoskeletal organization. Inactive GDP-bound Rho GTPases reside in the cytosol, are found in a complex with Rho GDP-dissociation inhibitors (Rho GDIs), and are released from the GDI protein in order to translocate to membranes upon activation. The polypeptide is Rac-like GTP-binding protein RAC13 (RAC13) (Gossypium hirsutum (Upland cotton)).